Here is a 157-residue protein sequence, read N- to C-terminus: Transcription elongation factor GreA (157 aa).

Residues leucine 12–lysine 74 are a coiled coil.

It belongs to the GreA/GreB family.

Necessary for efficient RNA polymerase transcription elongation past template-encoded arresting sites. The arresting sites in DNA have the property of trapping a certain fraction of elongating RNA polymerases that pass through, resulting in locked ternary complexes. Cleavage of the nascent transcript by cleavage factors such as GreA or GreB allows the resumption of elongation from the new 3'terminus. GreA releases sequences of 2 to 3 nucleotides. The protein is Transcription elongation factor GreA of Thermoanaerobacter pseudethanolicus (strain ATCC 33223 / 39E) (Clostridium thermohydrosulfuricum).